The chain runs to 198 residues: Recombination protein RecR (198 aa).

The C4-type zinc-finger motif lies at 57–72; it reads CAMCNTFTESAVCETC. Positions 80–175 constitute a Toprim domain; the sequence is ALLCVVETPG…KVSRLARGVP (96 aa).

This sequence belongs to the RecR family.

Functionally, may play a role in DNA repair. It seems to be involved in an RecBC-independent recombinational process of DNA repair. It may act with RecF and RecO. The sequence is that of Recombination protein RecR from Herminiimonas arsenicoxydans.